The sequence spans 477 residues: Probable periplasmic serine endoprotease DegP-like (477 aa).

The N-terminal stretch at 1–27 is a signal peptide; that stretch reads MSIPRLKSYLMMFAAVLMLGQVLTAQA. Catalysis depends on charge relay system residues His-117, Asp-147, and Ser-220. Substrate is bound by residues 218–220 and 275–279; these read GNS and LGVVI. 2 consecutive PDZ domains span residues 264–355 and 361–466; these read LKKD…IRNG and DISV…LRQG.

Belongs to the peptidase S1C family.

The protein resides in the periplasm. It carries out the reaction Acts on substrates that are at least partially unfolded. The cleavage site P1 residue is normally between a pair of hydrophobic residues, such as Val-|-Val.. Might be efficient in the degradation of transiently denatured and unfolded proteins which accumulate in the periplasm following stress conditions. In Pseudomonas putida (strain ATCC 700007 / DSM 6899 / JCM 31910 / BCRC 17059 / LMG 24140 / F1), this protein is Probable periplasmic serine endoprotease DegP-like.